Here is a 468-residue protein sequence, read N- to C-terminus: 3-isopropylmalate dehydratase large subunit (468 aa).

Cys346, Cys406, and Cys409 together coordinate [4Fe-4S] cluster.

The protein belongs to the aconitase/IPM isomerase family. LeuC type 1 subfamily. As to quaternary structure, heterodimer of LeuC and LeuD. [4Fe-4S] cluster serves as cofactor.

The catalysed reaction is (2R,3S)-3-isopropylmalate = (2S)-2-isopropylmalate. It functions in the pathway amino-acid biosynthesis; L-leucine biosynthesis; L-leucine from 3-methyl-2-oxobutanoate: step 2/4. Catalyzes the isomerization between 2-isopropylmalate and 3-isopropylmalate, via the formation of 2-isopropylmaleate. The sequence is that of 3-isopropylmalate dehydratase large subunit from Cyanothece sp. (strain PCC 7425 / ATCC 29141).